The primary structure comprises 386 residues: UDP-N-acetylbacillosamine transaminase (386 aa).

Residues 25-28, Ala56, and Ser179 contribute to the substrate site; that span reads NYIA. An N6-(pyridoxal phosphate)lysine modification is found at Lys184. Residues Asn227 and 325–328 each bind substrate; that span reads QIET.

This sequence belongs to the DegT/DnrJ/EryC1 family. It depends on pyridoxal 5'-phosphate as a cofactor.

The enzyme catalyses UDP-N-acetylbacillosamine + 2-oxoglutarate = UDP-2-acetamido-2,6-dideoxy-alpha-D-xylo-hex-4-ulose + L-glutamate. It functions in the pathway protein modification; protein glycosylation. Aminotransferase involved in the bacillosamine biosynthesis pathway by producing UDP-4-amino-4,6-dideoxy-alpha-D-GlcNAc (UDP-2-acetamido-4-amino-2,4,6-trideoxy-alpha-D-glucopyranose), a precursor used in the production of the glycan component 2,4-diacetamido-2,4,6-trideoxy-alpha-D-glucopyranose. Required for host colonization and virulence. Involved in the N-linked protein glycosylation pathway. In Campylobacter jejuni subsp. jejuni serotype O:2 (strain ATCC 700819 / NCTC 11168), this protein is UDP-N-acetylbacillosamine transaminase (pglE).